The following is a 769-amino-acid chain: Probable beta-glucosidase M (769 aa).

An N-terminal signal peptide occupies residues 1-22; sequence MHSNVGLAGLAGLLATASVCLS. N-linked (GlcNAc...) asparagine glycans are attached at residues asparagine 28, asparagine 75, and asparagine 262. Residue aspartate 290 is part of the active site. 7 N-linked (GlcNAc...) asparagine glycosylation sites follow: asparagine 318, asparagine 325, asparagine 396, asparagine 437, asparagine 510, asparagine 546, and asparagine 625.

This sequence belongs to the glycosyl hydrolase 3 family.

Its subcellular location is the secreted. It carries out the reaction Hydrolysis of terminal, non-reducing beta-D-glucosyl residues with release of beta-D-glucose.. Its pathway is glycan metabolism; cellulose degradation. Functionally, beta-glucosidases are one of a number of cellulolytic enzymes involved in the degradation of cellulosic biomass. Catalyzes the last step releasing glucose from the inhibitory cellobiose. This chain is Probable beta-glucosidase M (bglM), found in Aspergillus fumigatus (strain CBS 144.89 / FGSC A1163 / CEA10) (Neosartorya fumigata).